A 115-amino-acid polypeptide reads, in one-letter code: Large ribosomal subunit protein bL19 (115 aa).

Belongs to the bacterial ribosomal protein bL19 family.

Functionally, this protein is located at the 30S-50S ribosomal subunit interface and may play a role in the structure and function of the aminoacyl-tRNA binding site. The protein is Large ribosomal subunit protein bL19 of Buchnera aphidicola subsp. Cinara cedri (strain Cc).